The following is a 373-amino-acid chain: Peptide chain release factor 1-like, mitochondrial (373 aa).

A mitochondrion-targeting transit peptide spans 1–25 (MRSGFLSGARRLWARRAFSRTPPPS). Positions 56-110 (QLAAAARLLSEKERELRDTESLLHDENEDLKKLAESEIALCQKQITELKHQIISL) form a coiled coil. A GGQ domain region spans residues 229 to 293 (PKDLRIDTKR…LRARLYSMHL (65 aa)). The GGQ motif lies at 243 to 245 (GGQ). Position 245 is an N5-methylglutamine (Q245).

Belongs to the prokaryotic/mitochondrial release factor family. In terms of processing, methylation of glutamine in the GGQ triplet by HEMK1 is conserved from bacteria to mammals.

Its subcellular location is the mitochondrion. Its function is as follows. Mitochondrial peptide chain release factor that directs the termination of translation in response to the peptide chain termination codons UAA and UAG. The polypeptide is Peptide chain release factor 1-like, mitochondrial (Mtrf1l) (Mus musculus (Mouse)).